Here is a 91-residue protein sequence, read N- to C-terminus: Probable Fe(2+)-trafficking protein (91 aa).

The protein belongs to the Fe(2+)-trafficking protein family.

Could be a mediator in iron transactions between iron acquisition and iron-requiring processes, such as synthesis and/or repair of Fe-S clusters in biosynthetic enzymes. The sequence is that of Probable Fe(2+)-trafficking protein from Xanthomonas euvesicatoria pv. vesicatoria (strain 85-10) (Xanthomonas campestris pv. vesicatoria).